We begin with the raw amino-acid sequence, 157 residues long: Nucleoside diphosphate kinase (157 aa).

Lys12, Phe60, Arg88, Thr94, and Arg105 together coordinate ATP. Catalysis depends on His121, which acts as the Pros-phosphohistidine intermediate.

The protein belongs to the NDK family. It depends on Mg(2+) as a cofactor.

It localises to the cytoplasm. The catalysed reaction is a 2'-deoxyribonucleoside 5'-diphosphate + ATP = a 2'-deoxyribonucleoside 5'-triphosphate + ADP. The enzyme catalyses a ribonucleoside 5'-diphosphate + ATP = a ribonucleoside 5'-triphosphate + ADP. Functionally, major role in the synthesis of nucleoside triphosphates other than ATP. The ATP gamma phosphate is transferred to the NDP beta phosphate via a ping-pong mechanism, using a phosphorylated active-site intermediate. This chain is Nucleoside diphosphate kinase, found in Pyrococcus horikoshii (strain ATCC 700860 / DSM 12428 / JCM 9974 / NBRC 100139 / OT-3).